Reading from the N-terminus, the 4456-residue chain is Dynein axonemal heavy chain 2 (4456 aa).

Positions 1–12 (MASKAEKKRKVA) are enriched in basic residues. A disordered region spans residues 1–55 (MASKAEKKRKVAGRGGARAGRVVRAPQSTAGPGATEASLLPDGQEPEPESGKEDS). A stem region spans residues 1-1795 (MASKAEKKRK…RQTNTQFQYG (1795 aa)). Residues 1218-1274 (LDQIAQMRAMLMAMRDEENNLRSNLGIFKIEQPVSKDLQILEKELDALQQVWEITRD) are a coiled coil. The TPR 1 repeat unit spans residues 1439–1474 (EDNQVALSTMKASRFVKAFEKDVDHWERCLSLILEV). 4 AAA regions span residues 1794–2015 (YGYE…LLRY), 2075–2302 (DTIE…DNCN), 2407–2654 (RYPP…VFQG), and 2751–3003 (EYNL…LRRY). ATP contacts are provided by residues 1832–1839 (GPAGTGKT), 2113–2120 (GGTGSSKT), and 2445–2452 (GPVGTGKT). A TPR 2 repeat occupies 2750–2783 (NEYNLSPSVVPMQLVLFREAIEHITRIVRVIGQP). Residue 2791-2798 (GIGGSGRQ) participates in ATP binding. Residues 3018–3301 (YKKLLGEKRQ…EELRKKSEEM (284 aa)) are stalk. Residues 3041 to 3078 (FKIDETREKVEVMSLELEDAKKKVAEFQKQCEEYLVII) are a coiled coil. The stretch at 3101 to 3134 (IEEVKCQALADNAQKDLEEALPALEEAMRALESL) is one TPR 3 repeat. Coiled-coil stretches lie at residues 3245 to 3333 (KRIR…EEDL) and 3552 to 3596 (VRKE…GSLL). AAA regions lie at residues 3387–3617 (LTNP…EVTE) and 3833–4052 (VTSF…LLSL). TPR repeat units follow at residues 4101–4134 (TTPF…LPSM) and 4135–4169 (DPPE…QPQI).

The protein belongs to the dynein heavy chain family. As to quaternary structure, part of the axonemal inner dynein arm complex that consists of at least two heavy chains and a number of intermediate and light chains. Interacts with DNAI4.

The protein resides in the cytoplasm. The protein localises to the cytoskeleton. Its subcellular location is the cilium axoneme. It localises to the flagellum axoneme. As part of the axonemal inner dynein arm complex plays a central role in ciliary beat. Expressed in sperm flagellum, it is required for sperm motility. Dyneins are microtubule-based molecular motors possessing ATPase activities that can convert the chemical energy of ATP into relative sliding between adjacent microtubule doublets to generate ciliary bending. This Mus musculus (Mouse) protein is Dynein axonemal heavy chain 2.